Consider the following 257-residue polypeptide: Non-homologous end joining protein Ku (257 aa).

A Ku domain is found at threonine 9–glutamate 184.

It belongs to the prokaryotic Ku family. In terms of assembly, homodimer. Interacts with LigD.

With LigD forms a non-homologous end joining (NHEJ) DNA repair enzyme, which repairs dsDNA breaks with reduced fidelity. Binds linear dsDNA with 5'- and 3'- overhangs but not closed circular dsDNA nor ssDNA. Recruits and stimulates the ligase activity of LigD. This Lachnoclostridium phytofermentans (strain ATCC 700394 / DSM 18823 / ISDg) (Clostridium phytofermentans) protein is Non-homologous end joining protein Ku.